The primary structure comprises 207 residues: Ribosome maturation factor RimM (207 aa).

Positions 114 to 207 constitute a PRC barrel domain; that stretch reads DDEYYWVDLI…RIDSDWPLDY (94 aa).

This sequence belongs to the RimM family. As to quaternary structure, binds ribosomal protein uS19.

It localises to the cytoplasm. Its function is as follows. An accessory protein needed during the final step in the assembly of 30S ribosomal subunit, possibly for assembly of the head region. Essential for efficient processing of 16S rRNA. May be needed both before and after RbfA during the maturation of 16S rRNA. It has affinity for free ribosomal 30S subunits but not for 70S ribosomes. The sequence is that of Ribosome maturation factor RimM from Bordetella bronchiseptica (strain ATCC BAA-588 / NCTC 13252 / RB50) (Alcaligenes bronchisepticus).